We begin with the raw amino-acid sequence, 171 residues long: Large ribosomal subunit protein uL24 (171 aa).

The tract at residues 1 to 124 is large ribosomal subunit protein uL24; the sequence is MNIKTGDTVV…AKPAKTKAEK (124 aa). The segment at 108-171 is disordered; sequence GQTLDKAAKP…SVQKKGASGK (64 aa). Positions 125–171 are unknown; the sequence is VEKAATSSTDKPAKVTKAAKEAKPVKAVKSQKVEKNTSVQKKGASGK.

It belongs to the universal ribosomal protein uL24 family. As to quaternary structure, part of the 50S ribosomal subunit.

In terms of biological role, one of two assembly initiator proteins, it binds directly to the 5'-end of the 23S rRNA, where it nucleates assembly of the 50S subunit. Its function is as follows. One of the proteins that surrounds the polypeptide exit tunnel on the outside of the subunit. This Acholeplasma laidlawii (strain PG-8A) protein is Large ribosomal subunit protein uL24.